We begin with the raw amino-acid sequence, 377 residues long: 23S rRNA (uracil(747)-C(5))-methyltransferase RlmC (377 aa).

Residues C3, C11, C14, and C87 each contribute to the [4Fe-4S] cluster site. 4 residues coordinate S-adenosyl-L-methionine: Q212, F241, E262, and N307. The active-site Nucleophile is the C334.

It belongs to the class I-like SAM-binding methyltransferase superfamily. RNA M5U methyltransferase family. RlmC subfamily.

The enzyme catalyses uridine(747) in 23S rRNA + S-adenosyl-L-methionine = 5-methyluridine(747) in 23S rRNA + S-adenosyl-L-homocysteine + H(+). In terms of biological role, catalyzes the formation of 5-methyl-uridine at position 747 (m5U747) in 23S rRNA. This Photorhabdus laumondii subsp. laumondii (strain DSM 15139 / CIP 105565 / TT01) (Photorhabdus luminescens subsp. laumondii) protein is 23S rRNA (uracil(747)-C(5))-methyltransferase RlmC.